A 1018-amino-acid chain; its full sequence is Serine/threonine-protein kinase 31 (1018 aa).

One can recognise a Tudor domain in the interval 78-137 (NLDPKKIYGGLFSEDKCWYRCKVLKTISDDKCLVRYIDYGNTEILNRSDIVEIPPELQFS). The stretch at 298 to 358 (AKIKQDQKLI…TKHLESTLKT (61 aa)) forms a coiled coil. In terms of domain architecture, Protein kinase spans 711–1018 (IGLLKYMNSG…EKTRNGEANP (308 aa)). ATP-binding positions include 717–725 (MNSGGLLTM) and Lys-738. The disordered stretch occupies residues 988–1018 (IECTQHSREDESKMESLDRYSEKTRNGEANP).

The protein belongs to the protein kinase superfamily. Ser/Thr protein kinase family. Testis specific. Expressed only in male germ cells.

It catalyses the reaction L-seryl-[protein] + ATP = O-phospho-L-seryl-[protein] + ADP + H(+). It carries out the reaction L-threonyl-[protein] + ATP = O-phospho-L-threonyl-[protein] + ADP + H(+). This chain is Serine/threonine-protein kinase 31 (Stk31), found in Mus musculus (Mouse).